A 476-amino-acid chain; its full sequence is NAC domain-containing protein 86 (476 aa).

An NAC domain is found at 6–157; sequence LPPGFRFHPT…AYALCRVFKK (152 aa). A DNA-binding region spans residues 105–163; sequence IGTKKTLVYYRGRAPHGIRTGWVMHEYRLDESECEPSAFGMQDAYALCRVFKKIVIEAK.

As to expression, expressed in a few sieve element cells before enucleation and in phloem-pole pericycle cells.

It is found in the nucleus. Its function is as follows. Transcription factor directing sieve element enucleation and cytosol degradation. Not required for formation of lytic vacuoles. Regulates, with NAC045, the transcription of NEN1, NEN2, NEN3, NEN4, RTM1, RTM2, UBP16, PLDZETA, ABCB10 and At1g26450. This Arabidopsis thaliana (Mouse-ear cress) protein is NAC domain-containing protein 86.